A 287-amino-acid polypeptide reads, in one-letter code: Acetyl-coenzyme A carboxylase carboxyl transferase subunit beta (287 aa).

A CoA carboxyltransferase N-terminal domain is found at 25-287 (VWTKCSACEQ…KMLNTHVIEE (263 aa)). Residues cysteine 29, cysteine 32, cysteine 48, and cysteine 51 each coordinate Zn(2+). The C4-type zinc-finger motif lies at 29–51 (CSACEQVLYRAELERNLEVCPKC).

Belongs to the AccD/PCCB family. Acetyl-CoA carboxylase is a heterohexamer composed of biotin carboxyl carrier protein (AccB), biotin carboxylase (AccC) and two subunits each of ACCase subunit alpha (AccA) and ACCase subunit beta (AccD). Requires Zn(2+) as cofactor.

It localises to the cytoplasm. The enzyme catalyses N(6)-carboxybiotinyl-L-lysyl-[protein] + acetyl-CoA = N(6)-biotinyl-L-lysyl-[protein] + malonyl-CoA. It participates in lipid metabolism; malonyl-CoA biosynthesis; malonyl-CoA from acetyl-CoA: step 1/1. In terms of biological role, component of the acetyl coenzyme A carboxylase (ACC) complex. Biotin carboxylase (BC) catalyzes the carboxylation of biotin on its carrier protein (BCCP) and then the CO(2) group is transferred by the transcarboxylase to acetyl-CoA to form malonyl-CoA. The sequence is that of Acetyl-coenzyme A carboxylase carboxyl transferase subunit beta from Aeromonas salmonicida (strain A449).